A 378-amino-acid polypeptide reads, in one-letter code: 23S rRNA (uracil(747)-C(5))-methyltransferase RlmC (378 aa).

[4Fe-4S] cluster contacts are provided by Cys-3, Cys-11, Cys-14, and Cys-87. Positions 212, 241, 262, and 309 each coordinate S-adenosyl-L-methionine. Cys-336 (nucleophile) is an active-site residue.

Belongs to the class I-like SAM-binding methyltransferase superfamily. RNA M5U methyltransferase family. RlmC subfamily.

It catalyses the reaction uridine(747) in 23S rRNA + S-adenosyl-L-methionine = 5-methyluridine(747) in 23S rRNA + S-adenosyl-L-homocysteine + H(+). In terms of biological role, catalyzes the formation of 5-methyl-uridine at position 747 (m5U747) in 23S rRNA. This is 23S rRNA (uracil(747)-C(5))-methyltransferase RlmC from Shewanella pealeana (strain ATCC 700345 / ANG-SQ1).